Consider the following 100-residue polypeptide: uncharacterized protein (100 aa).

An N-terminal signal peptide occupies residues 1–26 (MKRLLVSLRVWMVFLMNWVTPDRKTA).

This is an uncharacterized protein from Bacillus subtilis (strain 168).